Consider the following 68-residue polypeptide: Adipokinetic prohormone type 1 (68 aa).

The N-terminal stretch at Met1 to Ala20 is a signal peptide. Gln21 is subject to Pyrrolidone carboxylic acid. Gly30 is subject to Glycine amide. The propeptide occupies Ser34 to Ser68.

Expressed in antennal lobe (AL), corpora cardiaca (CC), corpora allata (CA) and gnathal ganglion (GNG) (at protein level). Expression in CC and CA detected in all animals, expression in GNG in some animals and in AL in few animals (at protein level).

The protein resides in the secreted. Its function is as follows. This hormone, released from cells in the corpora cardiaca, causes release of diglycerides from the fat body and stimulation of muscles to use these diglycerides as an energy source during energy-demanding processes. The chain is Adipokinetic prohormone type 1 from Agrotis ipsilon (Black cutworm moth).